We begin with the raw amino-acid sequence, 187 residues long: MSRIGKKPIPVPRGVEVTIAEGNVVTVKGPKGTLIQRLPPEMIITHENGVITVARLSDQKQHRALHGLTRSLIANMVTGVTEGYQRVLEITGIGYRAVREGKNLILQVGFSHPIRVTPPEGITFEVMERRSANEPQQVIIRGIDKQKVGEEAAKLRALRPPEPYKGYGIKYREERVRRKAGKAGKAR.

This sequence belongs to the universal ribosomal protein uL6 family. As to quaternary structure, part of the 50S ribosomal subunit.

This protein binds to the 23S rRNA, and is important in its secondary structure. It is located near the subunit interface in the base of the L7/L12 stalk, and near the tRNA binding site of the peptidyltransferase center. This Roseiflexus castenholzii (strain DSM 13941 / HLO8) protein is Large ribosomal subunit protein uL6.